We begin with the raw amino-acid sequence, 533 residues long: Protein translocase subunit SecD (533 aa).

A run of 6 helical transmembrane segments spans residues alanine 8 to serine 28, isoleucine 377 to valine 397, leucine 400 to leucine 420, leucine 422 to isoleucine 442, leucine 469 to glycine 489, and glycine 495 to threonine 515.

This sequence belongs to the SecD/SecF family. SecD subfamily. As to quaternary structure, forms a complex with SecF. Part of the essential Sec protein translocation apparatus which comprises SecA, SecYEG and auxiliary proteins SecDF-YajC and YidC.

The protein localises to the cell inner membrane. Functionally, part of the Sec protein translocase complex. Interacts with the SecYEG preprotein conducting channel. SecDF uses the proton motive force (PMF) to complete protein translocation after the ATP-dependent function of SecA. The polypeptide is Protein translocase subunit SecD (Syntrophobacter fumaroxidans (strain DSM 10017 / MPOB)).